Here is a 340-residue protein sequence, read N- to C-terminus: Cysteinyl leukotriene receptor 1 (340 aa).

The Extracellular portion of the chain corresponds to 1–31 (MDETGNPTIPPASNNTCYDSIDDFRNQVYST). An N-linked (GlcNAc...) asparagine glycan is attached at N14. The chain crosses the membrane as a helical span at residues 32-52 (LYSMISVVGFFGNGFVLYVLV). Residues 53 to 60 (KTYHEKSA) lie on the Cytoplasmic side of the membrane. Residues 61–81 (FQVYMINLAVADLLCVCTLPL) traverse the membrane as a helical segment. Topologically, residues 82–109 (RVAYYVHKGIWLFGDFLCRLSTYALYVN) are extracellular. An intrachain disulfide couples C99 to C176. Residues 110-130 (LYCSIFFMTAMSFFRCVAIVF) traverse the membrane as a helical segment. Over 131–144 (PVQNISLVTQKKAR) the chain is Cytoplasmic. Residues 145–165 (LVCIAIWMFVILTSSPFLMAN) form a helical membrane-spanning segment. The Extracellular portion of the chain corresponds to 166-196 (TYKDEKNNTKCFEPPQDNQAKNYVLILHYVS). N-linked (GlcNAc...) asparagine glycosylation is present at N172. A helical membrane pass occupies residues 197–217 (LFIGFIIPFITIIVCYTMIIF). The Cytoplasmic portion of the chain corresponds to 218 to 233 (TLLKSSMKKNLSSRKR). Residues 234–254 (AIGMIIVVTAAFLVSFMPYHI) traverse the membrane as a helical segment. The Extracellular segment spans residues 255–279 (QRTIHLHFLHNKTKPCDSILRMQKS). An N-linked (GlcNAc...) asparagine glycan is attached at N265. A helical membrane pass occupies residues 280 to 300 (VVITLSLAASNCCFDPLLYFF). Residues 301 to 340 (SGGNFRRRLSTIRKYSLSSMTYIPKKKTSLPQKGKDICKE) lie on the Cytoplasmic side of the membrane.

This sequence belongs to the G-protein coupled receptor 1 family.

The protein localises to the cell membrane. Receptor for cysteinyl leukotrienes mediating bronchoconstriction of individuals with and without asthma. Stimulation by LTD4 results in the contraction and proliferation of smooth muscle, edema, eosinophil migration and damage to the mucus layer in the lung. This response is mediated via a G-protein that activates a phosphatidylinositol-calcium second messenger system. The chain is Cysteinyl leukotriene receptor 1 (CYSLTR1) from Cavia porcellus (Guinea pig).